A 201-amino-acid chain; its full sequence is 3-isopropylmalate dehydratase small subunit (201 aa).

The protein belongs to the LeuD family. LeuD type 1 subfamily. In terms of assembly, heterodimer of LeuC and LeuD.

It carries out the reaction (2R,3S)-3-isopropylmalate = (2S)-2-isopropylmalate. It functions in the pathway amino-acid biosynthesis; L-leucine biosynthesis; L-leucine from 3-methyl-2-oxobutanoate: step 2/4. Catalyzes the isomerization between 2-isopropylmalate and 3-isopropylmalate, via the formation of 2-isopropylmaleate. This is 3-isopropylmalate dehydratase small subunit from Brucella abortus (strain S19).